Here is a 239-residue protein sequence, read N- to C-terminus: Ribose-5-phosphate isomerase A (239 aa).

Substrate is bound by residues 34–37 (TGST), 94–97 (DGAD), and 107–110 (KGGG). The Proton acceptor role is filled by E116. K134 lines the substrate pocket.

It belongs to the ribose 5-phosphate isomerase family. In terms of assembly, homodimer.

The enzyme catalyses aldehydo-D-ribose 5-phosphate = D-ribulose 5-phosphate. Its pathway is carbohydrate degradation; pentose phosphate pathway; D-ribose 5-phosphate from D-ribulose 5-phosphate (non-oxidative stage): step 1/1. Its function is as follows. Catalyzes the reversible conversion of ribose-5-phosphate to ribulose 5-phosphate. This Treponema denticola (strain ATCC 35405 / DSM 14222 / CIP 103919 / JCM 8153 / KCTC 15104) protein is Ribose-5-phosphate isomerase A.